A 501-amino-acid polypeptide reads, in one-letter code: 2,3-bisphosphoglycerate-independent phosphoglycerate mutase (501 aa).

Residues D12 and S62 each contribute to the Mn(2+) site. Residue S62 is the Phosphoserine intermediate of the active site. Residues H121, 150-151, R182, R188, 253-256, and K323 each bind substrate; these read RD and RSDR. Mn(2+) is bound by residues D390, H394, D431, H432, and H450.

The protein belongs to the BPG-independent phosphoglycerate mutase family. As to quaternary structure, monomer. It depends on Mn(2+) as a cofactor.

It carries out the reaction (2R)-2-phosphoglycerate = (2R)-3-phosphoglycerate. The protein operates within carbohydrate degradation; glycolysis; pyruvate from D-glyceraldehyde 3-phosphate: step 3/5. Its function is as follows. Catalyzes the interconversion of 2-phosphoglycerate and 3-phosphoglycerate. This chain is 2,3-bisphosphoglycerate-independent phosphoglycerate mutase, found in Ehrlichia canis (strain Jake).